Here is a 525-residue protein sequence, read N- to C-terminus: GMP synthase [glutamine-hydrolyzing] (525 aa).

A Glutamine amidotransferase type-1 domain is found at 3–200 (KILILDFGSQ…VLHVAGCKPS (198 aa)). Catalysis depends on cysteine 79, which acts as the Nucleophile. Residues histidine 174 and glutamate 176 contribute to the active site. Positions 201–393 (WTMPNYIDEA…LGLPHDMVYR (193 aa)) constitute a GMPS ATP-PPase domain. 228–234 (SGGVDSS) provides a ligand contact to ATP.

In terms of assembly, homodimer.

The enzyme catalyses XMP + L-glutamine + ATP + H2O = GMP + L-glutamate + AMP + diphosphate + 2 H(+). It functions in the pathway purine metabolism; GMP biosynthesis; GMP from XMP (L-Gln route): step 1/1. Functionally, catalyzes the synthesis of GMP from XMP. The protein is GMP synthase [glutamine-hydrolyzing] of Chromobacterium violaceum (strain ATCC 12472 / DSM 30191 / JCM 1249 / CCUG 213 / NBRC 12614 / NCIMB 9131 / NCTC 9757 / MK).